A 213-amino-acid polypeptide reads, in one-letter code: Large ribosomal subunit protein uL4 (213 aa).

The segment at 41–75 (GTASTKTRAEVSRSGKKMYSQKGTGNARHGDRSVP) is disordered.

This sequence belongs to the universal ribosomal protein uL4 family. Part of the 50S ribosomal subunit.

In terms of biological role, one of the primary rRNA binding proteins, this protein initially binds near the 5'-end of the 23S rRNA. It is important during the early stages of 50S assembly. It makes multiple contacts with different domains of the 23S rRNA in the assembled 50S subunit and ribosome. Its function is as follows. Forms part of the polypeptide exit tunnel. This Deinococcus geothermalis (strain DSM 11300 / CIP 105573 / AG-3a) protein is Large ribosomal subunit protein uL4.